A 650-amino-acid chain; its full sequence is Fructose-1,6-bisphosphatase class 3 (650 aa).

Belongs to the FBPase class 3 family. Mn(2+) is required as a cofactor.

The enzyme catalyses beta-D-fructose 1,6-bisphosphate + H2O = beta-D-fructose 6-phosphate + phosphate. It functions in the pathway carbohydrate biosynthesis; gluconeogenesis. This Staphylococcus xylosus protein is Fructose-1,6-bisphosphatase class 3.